We begin with the raw amino-acid sequence, 337 residues long: tRNA-dihydrouridine synthase B (337 aa).

Residues 19 to 21 (PMA) and Q73 contribute to the FMN site. C103 acts as the Proton donor in catalysis. Residues K142, 203–205 (NGD), and 227–228 (GR) each bind FMN.

It belongs to the Dus family. DusB subfamily. The cofactor is FMN.

The enzyme catalyses a 5,6-dihydrouridine in tRNA + NAD(+) = a uridine in tRNA + NADH + H(+). The catalysed reaction is a 5,6-dihydrouridine in tRNA + NADP(+) = a uridine in tRNA + NADPH + H(+). In terms of biological role, catalyzes the synthesis of 5,6-dihydrouridine (D), a modified base found in the D-loop of most tRNAs, via the reduction of the C5-C6 double bond in target uridines. The chain is tRNA-dihydrouridine synthase B from Pseudomonas putida (strain ATCC 47054 / DSM 6125 / CFBP 8728 / NCIMB 11950 / KT2440).